Consider the following 538-residue polypeptide: Pentatricopeptide repeat-containing protein At1g33350 (538 aa).

PPR repeat units lie at residues 87–123 (NTHL…SVPR), 125–159 (NHFI…GFHL), 160–191 (YVVV…MSER), 192–226 (NVVS…DVPS), 227–253 (WNAI…MINE), 259–293 (NEVT…DLSS), 294–324 (DVFV…ASKK), 325–359 (SLTA…NIND), 363–398 (DHIT…GIEP), and 399–433 (RIEH…ADEA). Residues 434–509 (IWGSLLNACK…PPGWSRIEID (76 aa)) form a type E motif region.

The protein belongs to the PPR family. PCMP-E subfamily.

In Arabidopsis thaliana (Mouse-ear cress), this protein is Pentatricopeptide repeat-containing protein At1g33350 (PCMP-E57).